We begin with the raw amino-acid sequence, 161 residues long: Putative pre-16S rRNA nuclease (161 aa).

The protein belongs to the YqgF nuclease family.

The protein resides in the cytoplasm. Its function is as follows. Could be a nuclease involved in processing of the 5'-end of pre-16S rRNA. The chain is Putative pre-16S rRNA nuclease from Prochlorococcus marinus (strain MIT 9313).